Here is a 178-residue protein sequence, read N- to C-terminus: Inorganic pyrophosphatase (178 aa).

3 residues coordinate substrate: Lys-30, Arg-44, and Tyr-56. Mg(2+) contacts are provided by Asp-66, Asp-71, and Asp-103. Tyr-140 lines the substrate pocket.

This sequence belongs to the PPase family. As to quaternary structure, homohexamer. Requires Mg(2+) as cofactor.

The protein resides in the cytoplasm. It carries out the reaction diphosphate + H2O = 2 phosphate + H(+). In terms of biological role, catalyzes the hydrolysis of inorganic pyrophosphate (PPi) forming two phosphate ions. The sequence is that of Inorganic pyrophosphatase from Thermococcus kodakarensis (strain ATCC BAA-918 / JCM 12380 / KOD1) (Pyrococcus kodakaraensis (strain KOD1)).